We begin with the raw amino-acid sequence, 154 residues long: Ribosome maturation factor RimP (154 aa).

This sequence belongs to the RimP family.

The protein resides in the cytoplasm. Its function is as follows. Required for maturation of 30S ribosomal subunits. The chain is Ribosome maturation factor RimP from Clostridium perfringens (strain ATCC 13124 / DSM 756 / JCM 1290 / NCIMB 6125 / NCTC 8237 / Type A).